The following is a 303-amino-acid chain: Nitrogenase iron protein (303 aa).

Residue 11–18 (GKGGIGKS) participates in ATP binding. Cys-112 is a [4Fe-4S] cluster binding site. Arg-115 carries the ADP-ribosylarginine; by dinitrogenase reductase ADP-ribosyltransferase modification. Cys-147 serves as a coordination point for [4Fe-4S] cluster.

It belongs to the NifH/BchL/ChlL family. As to quaternary structure, homodimer. [4Fe-4S] cluster is required as a cofactor. Post-translationally, the reversible ADP-ribosylation of Arg-115 inactivates the nitrogenase reductase and regulates nitrogenase activity.

The enzyme catalyses N2 + 8 reduced [2Fe-2S]-[ferredoxin] + 16 ATP + 16 H2O = H2 + 8 oxidized [2Fe-2S]-[ferredoxin] + 2 NH4(+) + 16 ADP + 16 phosphate + 6 H(+). The key enzymatic reactions in nitrogen fixation are catalyzed by the nitrogenase complex, which has 2 components: the iron protein and the molybdenum-iron protein. The chain is Nitrogenase iron protein from Wolinella succinogenes (strain ATCC 29543 / DSM 1740 / CCUG 13145 / JCM 31913 / LMG 7466 / NCTC 11488 / FDC 602W) (Vibrio succinogenes).